Reading from the N-terminus, the 628-residue chain is Chaperone protein DnaK (628 aa).

T195 carries the post-translational modification Phosphothreonine; by autocatalysis. The tract at residues 545 to 628 (QLEENEGAAQ…VIDADFKAAE (84 aa)) is disordered. Over residues 555–591 (DAKDALKAAADEAEEAVRSEDDARIESAQKRLEEELR) the composition is skewed to basic and acidic residues. The segment covering 596-612 (AQQAAGQGQPQGAQAQG) has biased composition (low complexity). Residues 614 to 628 (KADDDVIDADFKAAE) are compositionally biased toward basic and acidic residues.

The protein belongs to the heat shock protein 70 family.

Acts as a chaperone. In Deinococcus deserti (strain DSM 17065 / CIP 109153 / LMG 22923 / VCD115), this protein is Chaperone protein DnaK.